A 72-amino-acid polypeptide reads, in one-letter code: uncharacterized protein (72 aa).

This is an uncharacterized protein from Acidianus hospitalis (AFV-1).